A 418-amino-acid polypeptide reads, in one-letter code: Tryptophan synthase beta chain 1 (418 aa).

At Lys99 the chain carries N6-(pyridoxal phosphate)lysine.

It belongs to the TrpB family. In terms of assembly, tetramer of two alpha and two beta chains. Pyridoxal 5'-phosphate is required as a cofactor.

The catalysed reaction is (1S,2R)-1-C-(indol-3-yl)glycerol 3-phosphate + L-serine = D-glyceraldehyde 3-phosphate + L-tryptophan + H2O. It functions in the pathway amino-acid biosynthesis; L-tryptophan biosynthesis; L-tryptophan from chorismate: step 5/5. Its function is as follows. The beta subunit is responsible for the synthesis of L-tryptophan from indole and L-serine. This Corynebacterium efficiens (strain DSM 44549 / YS-314 / AJ 12310 / JCM 11189 / NBRC 100395) protein is Tryptophan synthase beta chain 1 (trpB1).